A 291-amino-acid polypeptide reads, in one-letter code: Ribosomal RNA small subunit methyltransferase H (291 aa).

S-adenosyl-L-methionine is bound by residues 36 to 38, aspartate 55, alanine 90, aspartate 102, and glutamine 109; that span reads GGH.

This sequence belongs to the methyltransferase superfamily. RsmH family.

Its subcellular location is the cytoplasm. The enzyme catalyses cytidine(1402) in 16S rRNA + S-adenosyl-L-methionine = N(4)-methylcytidine(1402) in 16S rRNA + S-adenosyl-L-homocysteine + H(+). Its function is as follows. Specifically methylates the N4 position of cytidine in position 1402 (C1402) of 16S rRNA. This Thermosipho africanus (strain TCF52B) protein is Ribosomal RNA small subunit methyltransferase H.